A 123-amino-acid chain; its full sequence is WAP four-disulfide core domain protein 5 (123 aa).

A signal peptide spans 1–24; that stretch reads MRFWSLFLLVVLLAVGGQLPAASG. 2 WAP domains span residues 27–74 and 75–121; these read KGER…VPRI and LVKR…RDPA. Cystine bridges form between C34/C62, C41/C66, C49/C61, C55/C70, C81/C109, C88/C113, C96/C108, and C102/C117.

The protein resides in the secreted. Functionally, putative acid-stable proteinase inhibitor. This is WAP four-disulfide core domain protein 5 (WFDC5) from Lemur catta (Ring-tailed lemur).